Consider the following 364-residue polypeptide: Mannitol-1-phosphate 5-dehydrogenase (364 aa).

6–17 serves as a coordination point for NAD(+); the sequence is VLHFGAGNIGRG.

It belongs to the mannitol dehydrogenase family.

The catalysed reaction is D-mannitol 1-phosphate + NAD(+) = beta-D-fructose 6-phosphate + NADH + H(+). This chain is Mannitol-1-phosphate 5-dehydrogenase (mtlD), found in Mycoplasma pneumoniae (strain ATCC 29342 / M129 / Subtype 1) (Mycoplasmoides pneumoniae).